The following is a 624-amino-acid chain: Leucine-rich repeat and IQ domain-containing protein 3 (624 aa).

LRR repeat units lie at residues 51–72, 73–94, and 98–119; these read SLRV…QSCI, KLIK…KFWN, and NLKL…CVLS. The LRRCT domain maps to 132–179; it reads CPVSLKKGYRHVLVNSIWPLKALDHHVISDEEIIQNWHLPERFKACNH. The IQ domain occupies 215–244; it reads HNSPVLIVQRWIRGFLVRKNLSPVFFHKKK. Residues 553 to 614 adopt a coiled-coil conformation; sequence KQKLKAEKYR…TKVAIVKTNL (62 aa).

This is Leucine-rich repeat and IQ domain-containing protein 3 (LRRIQ3) from Homo sapiens (Human).